A 280-amino-acid polypeptide reads, in one-letter code: Secreted RxLR effector protein 39 (280 aa).

An N-terminal signal peptide occupies residues 1 to 19; sequence MRGAYYVAIALLIVASCSA. Residues 49–70 carry the RxLR-dEER motif; it reads RVLRGSRDLKNKWAVHAGGEDR. Residues 229–249 are disordered; that stretch reads EVKARSSKRQRTNPMLNNMDG.

Belongs to the RxLR effector family.

It is found in the secreted. The protein resides in the host nucleus. In terms of biological role, secreted effector that completely suppresses the host cell death induced by cell death-inducing proteins. The protein is Secreted RxLR effector protein 39 of Plasmopara viticola (Downy mildew of grapevine).